Here is a 450-residue protein sequence, read N- to C-terminus: MNEILNTKDINTIGEFFIETWGCQMNEEDSEKLSGMLKKEGYIRTEERENADVIIFNTCCVRENAELKVYGNLGILKGLKSKNPNLIIAVTGCMMQQKGMAETIKKKFPFVDIIIGTHNLHNFPNYLNEVKKKDTSVLKIQEKEDSIIENMPIDRKNSMKAFVTIMYGCNNFCTYCIVPYVRGRERSRTPENIEAEIKKLISEGYKEITLLGQNVNSYGKDLEPNVTFAELLKRVNNIEGLERVRFMTSHPKDLTDDVIEAIAKCDKLCEQIHLPVQSGSSEILKKMNRHYDREKYLDVVSKIKKLIPNVALSTDIIVGFPGETEKDFEETLSLVKEVEYDSAFTFLYSIRKGTPAAKFEDQVPEDVKHKRFNRLVEVVNEISAKKNKAYEGKIEEVLVEGTSKNDENKLMGRTRTGKLVNFIGDKDSIGEFVNVKIIKANSFSLTGEEI.

The 119-residue stretch at 14-132 (GEFFIETWGC…FPNYLNEVKK (119 aa)) folds into the MTTase N-terminal domain. Positions 23, 59, 93, 169, 173, and 176 each coordinate [4Fe-4S] cluster. The Radical SAM core domain maps to 155–385 (RKNSMKAFVT…VEVVNEISAK (231 aa)). The TRAM domain maps to 388-450 (KAYEGKIEEV…NSFSLTGEEI (63 aa)).

It belongs to the methylthiotransferase family. MiaB subfamily. Monomer. It depends on [4Fe-4S] cluster as a cofactor.

Its subcellular location is the cytoplasm. The enzyme catalyses N(6)-dimethylallyladenosine(37) in tRNA + (sulfur carrier)-SH + AH2 + 2 S-adenosyl-L-methionine = 2-methylsulfanyl-N(6)-dimethylallyladenosine(37) in tRNA + (sulfur carrier)-H + 5'-deoxyadenosine + L-methionine + A + S-adenosyl-L-homocysteine + 2 H(+). Its function is as follows. Catalyzes the methylthiolation of N6-(dimethylallyl)adenosine (i(6)A), leading to the formation of 2-methylthio-N6-(dimethylallyl)adenosine (ms(2)i(6)A) at position 37 in tRNAs that read codons beginning with uridine. In Clostridium botulinum (strain Langeland / NCTC 10281 / Type F), this protein is tRNA-2-methylthio-N(6)-dimethylallyladenosine synthase.